The following is a 218-amino-acid chain: Cytochrome b6 (218 aa).

Residues isoleucine 35–phenylalanine 55 traverse the membrane as a helical segment. Residue cysteine 38 coordinates heme c. Residues histidine 89 and histidine 103 each contribute to the heme b site. 3 consecutive transmembrane segments (helical) span residues alanine 93–phenylalanine 113, leucine 119–tyrosine 139, and leucine 189–isoleucine 209. 2 residues coordinate heme b: histidine 190 and histidine 205.

Belongs to the cytochrome b family. PetB subfamily. In terms of assembly, the 4 large subunits of the cytochrome b6-f complex are cytochrome b6, subunit IV (17 kDa polypeptide, PetD), cytochrome f and the Rieske protein, while the 4 small subunits are PetG, PetL, PetM and PetN. The complex functions as a dimer. The cofactor is heme b. Heme c is required as a cofactor.

It localises to the cellular thylakoid membrane. In terms of biological role, component of the cytochrome b6-f complex, which mediates electron transfer between photosystem II (PSII) and photosystem I (PSI), cyclic electron flow around PSI, and state transitions. The protein is Cytochrome b6 of Synechococcus sp. (strain RCC307).